The following is a 201-amino-acid chain: Adenylyl-sulfate kinase (201 aa).

35–42 lines the ATP pocket; the sequence is GLSGSGKS. The Phosphoserine intermediate role is filled by Ser-109.

It belongs to the APS kinase family.

The catalysed reaction is adenosine 5'-phosphosulfate + ATP = 3'-phosphoadenylyl sulfate + ADP + H(+). It participates in sulfur metabolism; hydrogen sulfide biosynthesis; sulfite from sulfate: step 2/3. In terms of biological role, catalyzes the synthesis of activated sulfate. The polypeptide is Adenylyl-sulfate kinase (Bacteroides thetaiotaomicron (strain ATCC 29148 / DSM 2079 / JCM 5827 / CCUG 10774 / NCTC 10582 / VPI-5482 / E50)).